We begin with the raw amino-acid sequence, 573 residues long: Sterol esterase 1 (573 aa).

At 1–12 the chain is on the cytoplasmic side; it reads MGVSAVLKRARN. The stretch at 13-33 is an intramembrane region; that stretch reads LLATFIVCCFMAVVLVLALAH. Over 34–573 the chain is Cytoplasmic; that stretch reads HFINEHRDTR…TELEMVAEKA (540 aa). The Nucleophile role is filled by Ser-315. Active-site charge relay system residues include Asp-489 and His-520.

It belongs to the AB hydrolase superfamily. Not N-glycosylated.

It is found in the lipid droplet. It localises to the membrane. The catalysed reaction is a sterol ester + H2O = a sterol + a fatty acid + H(+). Functionally, mediates the hydrolysis of steryl esters, thereby playing a central role in lipid metabolism. Under heme-deficient conditions, it constitutes the major steryl ester hydrolase, suggesting that it plays a central role in mobilization of steryl esters under anaerobic conditions. The sequence is that of Sterol esterase 1 (YEH1) from Saccharomyces cerevisiae (strain ATCC 204508 / S288c) (Baker's yeast).